We begin with the raw amino-acid sequence, 441 residues long: Ribulose bisphosphate carboxylase large chain (441 aa).

2 residues coordinate substrate: N89 and T139. K141 functions as the Proton acceptor in the catalytic mechanism. Substrate is bound at residue K143. K167, D169, and E170 together coordinate Mg(2+). K167 carries the post-translational modification N6-carboxylysine. H260 (proton acceptor) is an active-site residue. 3 residues coordinate substrate: R261, H293, and S345.

The protein belongs to the RuBisCO large chain family. Type I subfamily. Heterohexadecamer of 8 large chains and 8 small chains; disulfide-linked. The disulfide link is formed within the large subunit homodimers. Requires Mg(2+) as cofactor. The disulfide bond which can form in the large chain dimeric partners within the hexadecamer appears to be associated with oxidative stress and protein turnover.

The protein localises to the plastid. The protein resides in the chloroplast. The catalysed reaction is 2 (2R)-3-phosphoglycerate + 2 H(+) = D-ribulose 1,5-bisphosphate + CO2 + H2O. It catalyses the reaction D-ribulose 1,5-bisphosphate + O2 = 2-phosphoglycolate + (2R)-3-phosphoglycerate + 2 H(+). RuBisCO catalyzes two reactions: the carboxylation of D-ribulose 1,5-bisphosphate, the primary event in carbon dioxide fixation, as well as the oxidative fragmentation of the pentose substrate in the photorespiration process. Both reactions occur simultaneously and in competition at the same active site. This is Ribulose bisphosphate carboxylase large chain from Viola sororia (Woolly blue violet).